Reading from the N-terminus, the 55-residue chain is Large ribosomal subunit protein bL33 (55 aa).

The segment covering 1–10 (MAKGGREKIK) has biased composition (basic and acidic residues). Residues 1–27 (MAKGGREKIKLQSTAGTGHFYTTDKNK) are disordered.

Belongs to the bacterial ribosomal protein bL33 family.

The chain is Large ribosomal subunit protein bL33 from Polaromonas naphthalenivorans (strain CJ2).